We begin with the raw amino-acid sequence, 511 residues long: Sodium/proline symporter (511 aa).

13 consecutive transmembrane segments (helical) span residues 16–36, 53–73, 84–104, 138–158, 173–193, 199–219, 239–259, 285–305, 326–346, 380–400, 409–429, 437–457, and 466–486; these read WQTY…AFTY, IGPY…WMIM, LSAM…YFVV, IISG…GFVS, FGLI…GYLA, FFQG…AMMN, LFKG…LGYF, ISWM…GIAF, VLFH…AIMS, FVMI…AIAW, LVGN…LFAL, AGAV…IAWI, and IFGL…TYVV.

Belongs to the sodium:solute symporter (SSF) (TC 2.A.21) family.

It is found in the cell membrane. The catalysed reaction is L-proline(in) + Na(+)(in) = L-proline(out) + Na(+)(out). Catalyzes the sodium-dependent uptake of extracellular L-proline. Since most S.aureus strains are L-proline auxotrophs, this transporter may aid the bacterial persistence during an infection of tissues with low proline concentrations. The polypeptide is Sodium/proline symporter (Staphylococcus aureus).